A 126-amino-acid chain; its full sequence is Protein ApaG (126 aa).

In terms of domain architecture, ApaG spans 2 to 126 (SALDDSIRVE…FRLALPGLLH (125 aa)).

This Shewanella sp. (strain ANA-3) protein is Protein ApaG.